The chain runs to 233 residues: 3-dehydroquinate dehydratase (233 aa).

3-dehydroquinate is bound by residues 34-36 and R64; that span reads ELR. Catalysis depends on H118, which acts as the Proton donor/acceptor. The active-site Schiff-base intermediate with substrate is K145. 3 residues coordinate 3-dehydroquinate: R185, S205, and Q209.

It belongs to the type-I 3-dehydroquinase family. As to quaternary structure, homodimer.

The enzyme catalyses 3-dehydroquinate = 3-dehydroshikimate + H2O. Its pathway is metabolic intermediate biosynthesis; chorismate biosynthesis; chorismate from D-erythrose 4-phosphate and phosphoenolpyruvate: step 3/7. In terms of biological role, involved in the third step of the chorismate pathway, which leads to the biosynthesis of aromatic amino acids. Catalyzes the cis-dehydration of 3-dehydroquinate (DHQ) and introduces the first double bond of the aromatic ring to yield 3-dehydroshikimate. This Coxiella burnetii (strain CbuK_Q154) (Coxiella burnetii (strain Q154)) protein is 3-dehydroquinate dehydratase.